The following is a 39-amino-acid chain: Cytochrome b559 subunit beta (39 aa).

A helical membrane pass occupies residues 14–30 (WLAIHGLAVPTVFFLGS). Residue histidine 18 coordinates heme.

It belongs to the PsbE/PsbF family. Heterodimer of an alpha subunit and a beta subunit. PSII is composed of 1 copy each of membrane proteins PsbA, PsbB, PsbC, PsbD, PsbE, PsbF, PsbH, PsbI, PsbJ, PsbK, PsbL, PsbM, PsbT, PsbX, PsbY, PsbZ, Psb30/Ycf12, at least 3 peripheral proteins of the oxygen-evolving complex and a large number of cofactors. It forms dimeric complexes. Heme b is required as a cofactor.

The protein localises to the plastid. Its subcellular location is the chloroplast thylakoid membrane. This b-type cytochrome is tightly associated with the reaction center of photosystem II (PSII). PSII is a light-driven water:plastoquinone oxidoreductase that uses light energy to abstract electrons from H(2)O, generating O(2) and a proton gradient subsequently used for ATP formation. It consists of a core antenna complex that captures photons, and an electron transfer chain that converts photonic excitation into a charge separation. The polypeptide is Cytochrome b559 subunit beta (Staurastrum punctulatum (Green alga)).